The primary structure comprises 260 residues: MHSSVPAEIRSGQHQGHTAGLAPGCLQVNLVVLPASHAQAFGEYCALNPRPCPLILLTTPGQTDWTELGTGLDVRRDVPAYNIYENGVLSRTVPDLLNDWSDDLVTFALGFSFTFEHALLRAGIPVRNIATNTTVPMYQTNRETRSAGPFAGPLVVSMRPIPAAKVAKAHDISAQFPWARGAPIHSGDPKVLGIEDLDQPDWGDTSETRDGGVPVFWACGVTPQAALEEAELSLCITHRPGHMLVTDLPEHDPFRAGNLQ.

This sequence belongs to the D-glutamate cyclase family.

The sequence is that of Putative hydro-lyase Dshi_0610 from Dinoroseobacter shibae (strain DSM 16493 / NCIMB 14021 / DFL 12).